The primary structure comprises 488 residues: Bifunctional protein NifU/MnmA (488 aa).

The nifU-like protein stretch occupies residues 1 to 130 (MPERYGPRVI…DYWSRQGDAL (130 aa)). The segment at 143-488 (RRGVVAAMSG…GGGIIARRDA (346 aa)) is tRNA-specific 2-thiouridylase MnmA. ATP is bound by residues 149–156 (AMSGGVDS) and F175. Residue C240 is the Nucleophile of the active site. C240 and C333 form a disulfide bridge. An ATP-binding site is contributed by G264. Residues 283–285 (KDQ) form an interaction with tRNA region. The active-site Cysteine persulfide intermediate is the C333. The interaction with tRNA stretch occupies residues 433–434 (RY).

It in the N-terminal section; belongs to the NifU family. In the C-terminal section; belongs to the MnmA/TRMU family.

The protein localises to the cytoplasm. It catalyses the reaction S-sulfanyl-L-cysteinyl-[protein] + uridine(34) in tRNA + AH2 + ATP = 2-thiouridine(34) in tRNA + L-cysteinyl-[protein] + A + AMP + diphosphate + H(+). Functionally, may be involved in the formation or repair of [Fe-S] clusters present in iron-sulfur proteins. In terms of biological role, catalyzes the 2-thiolation of uridine at the wobble position (U34) of tRNA, leading to the formation of s(2)U34. This Rubrobacter xylanophilus (strain DSM 9941 / JCM 11954 / NBRC 16129 / PRD-1) protein is Bifunctional protein NifU/MnmA (nifU/mnmA).